A 234-amino-acid polypeptide reads, in one-letter code: DEAD-box ATP-dependent RNA helicase 3 (234 aa).

Positions Leu120–Arg148 match the Q motif motif. The 84-residue stretch at Leu151–Ser234 folds into the Helicase ATP-binding domain. Ala164–Thr171 lines the ATP pocket.

It belongs to the DEAD box helicase family. DDX21/DDX50 subfamily.

The polypeptide is DEAD-box ATP-dependent RNA helicase 3 (Helianthus annuus (Common sunflower)).